Reading from the N-terminus, the 2497-residue chain is Highly reducing polyketide synthase aurA (2497 aa).

One can recognise a Ketosynthase family 3 (KS3) domain in the interval proline 3–serine 437. Catalysis depends on for beta-ketoacyl synthase activity residues cysteine 175, histidine 314, and histidine 357. A malonyl-CoA:ACP transacylase (MAT) domain region spans residues isoleucine 575–glycine 896. Serine 669 serves as the catalytic For malonyltransferase activity. The segment at histidine 965–methionine 1095 is N-terminal hotdog fold. Residues histidine 965–glutamine 1255 form a dehydratase (DH) domain region. Residues histidine 965–serine 1259 enclose the PKS/mFAS DH domain. Histidine 997 serves as the catalytic Proton acceptor; for dehydratase activity. The tract at residues methionine 1110–serine 1259 is C-terminal hotdog fold. Aspartate 1166 serves as the catalytic Proton donor; for dehydratase activity. Residues asparagine 1399–leucine 1594 form a methyltransferase (CMet) domain region. Residues lysine 2150 to isoleucine 2294 are ketoreductase (KR) domain. Residues glutamate 2409–isoleucine 2487 form the Carrier domain. Serine 2447 carries the O-(pantetheine 4'-phosphoryl)serine modification.

Pantetheine 4'-phosphate serves as cofactor.

The protein operates within polyketide biosynthesis. In terms of biological role, highly reducing polyketide synthase (HR-PKS); part of the gene cluster that mediates the biosynthesis of aurovertins, fungal polyketides that exhibit potent inhibition of adenosine triphosphate synthase. Tha biosynthesis starts with the HR-PKS aurA that selects propionate as the starter unit; synthesizes a hexa-ene chain through the repeated functions of the KR and DH domains in the first six iterations; selectively introduces three alpha-methyl substitutions at C4, C6, and C16 using the S-adensylmethionine-dependent cMET; and shuts off KR and DH in the last three iterations to afford a 1,3,5-triketo portion that can undergo intramolecular cyclization to yield the alpha-pyrone intermediate. AurE may act as a cyclase and enhances the rate of pyrone formation and product release of aurA. The methyltransferase aurB then methylates the C17 hydroxyl group. C17 methylation is required to initiate epoxidation by the downstream monooxygenase aurC. The monooxygenase aurC and the epoxide hydrolase aurD can iteratively transform the terminal triene portion of the methylated precursor into the dioxabicyclo[3.2.1]octane scaffold of aurovertin E. Epoxidation modifications of the precursor occur in two separate steps; bis-epoxidation of the two terminal olefins takes place first, followed by another epoxidation that occurs at C7-C8 after tetrahydrofuran formation. The O-acyltransferase aurG converts aurovertin E to aurovertin A. In Calcarisporium arbuscula (Dendryphion arbuscula), this protein is Highly reducing polyketide synthase aurA.